The sequence spans 239 residues: Serine protease SplD (239 aa).

The first 36 residues, 1–36 (MNKNIIIKSIAALTILTSITGVGTTVVDGIQQTAKA), serve as a signal peptide directing secretion. Active-site charge relay system residues include His-75, Asp-114, and Ser-192.

The protein belongs to the peptidase S1B family.

Its subcellular location is the secreted. The polypeptide is Serine protease SplD (splD) (Staphylococcus aureus (strain Mu3 / ATCC 700698)).